Here is a 173-residue protein sequence, read N- to C-terminus: Crossover junction endodeoxyribonuclease RuvC (173 aa).

Active-site residues include Asp-8, Glu-67, and Asp-139. The Mg(2+) site is built by Asp-8, Glu-67, and Asp-139.

This sequence belongs to the RuvC family. Homodimer which binds Holliday junction (HJ) DNA. The HJ becomes 2-fold symmetrical on binding to RuvC with unstacked arms; it has a different conformation from HJ DNA in complex with RuvA. In the full resolvosome a probable DNA-RuvA(4)-RuvB(12)-RuvC(2) complex forms which resolves the HJ. Mg(2+) serves as cofactor.

The protein localises to the cytoplasm. It catalyses the reaction Endonucleolytic cleavage at a junction such as a reciprocal single-stranded crossover between two homologous DNA duplexes (Holliday junction).. The RuvA-RuvB-RuvC complex processes Holliday junction (HJ) DNA during genetic recombination and DNA repair. Endonuclease that resolves HJ intermediates. Cleaves cruciform DNA by making single-stranded nicks across the HJ at symmetrical positions within the homologous arms, yielding a 5'-phosphate and a 3'-hydroxyl group; requires a central core of homology in the junction. The consensus cleavage sequence is 5'-(A/T)TT(C/G)-3'. Cleavage occurs on the 3'-side of the TT dinucleotide at the point of strand exchange. HJ branch migration catalyzed by RuvA-RuvB allows RuvC to scan DNA until it finds its consensus sequence, where it cleaves and resolves the cruciform DNA. This Photobacterium profundum (strain SS9) protein is Crossover junction endodeoxyribonuclease RuvC.